Reading from the N-terminus, the 422-residue chain is Glucose-1-phosphate adenylyltransferase 2 (422 aa).

Alpha-D-glucose 1-phosphate-binding positions include Tyr110, Gly175, 190 to 191 (EK), and Ser208.

It belongs to the bacterial/plant glucose-1-phosphate adenylyltransferase family. In terms of assembly, homotetramer.

The catalysed reaction is alpha-D-glucose 1-phosphate + ATP + H(+) = ADP-alpha-D-glucose + diphosphate. The protein operates within glycan biosynthesis; glycogen biosynthesis. Involved in the biosynthesis of ADP-glucose, a building block required for the elongation reactions to produce glycogen. Catalyzes the reaction between ATP and alpha-D-glucose 1-phosphate (G1P) to produce pyrophosphate and ADP-Glc. This chain is Glucose-1-phosphate adenylyltransferase 2, found in Alkalilimnicola ehrlichii (strain ATCC BAA-1101 / DSM 17681 / MLHE-1).